The chain runs to 346 residues: STE20-related kinase adapter protein stlk (346 aa).

A Protein kinase domain is found at 10-298; that stretch reads YKLLEILKNG…ASKLMTHSFL (289 aa). ATP-binding positions include 16–24 and lysine 38; that span reads LKNGMIGTV.

Belongs to the protein kinase superfamily. STE Ser/Thr protein kinase family. STE20 subfamily.

The chain is STE20-related kinase adapter protein stlk from Drosophila melanogaster (Fruit fly).